We begin with the raw amino-acid sequence, 459 residues long: NADH-ubiquinone oxidoreductase chain 4 (459 aa).

Transmembrane regions (helical) follow at residues His-22 to Leu-42, Pro-61 to Ser-81, Arg-94 to Ala-113, Leu-114 to Ile-134, Ala-146 to Thr-166, Trp-197 to Leu-217, Pro-225 to Ile-245, Leu-258 to Leu-278, Ser-285 to Leu-304, Leu-308 to Leu-330, Leu-352 to Pro-372, Leu-380 to Gly-400, and Leu-437 to Thr-457.

It belongs to the complex I subunit 4 family.

Its subcellular location is the mitochondrion membrane. It carries out the reaction a ubiquinone + NADH + 5 H(+)(in) = a ubiquinol + NAD(+) + 4 H(+)(out). Core subunit of the mitochondrial membrane respiratory chain NADH dehydrogenase (Complex I) that is believed to belong to the minimal assembly required for catalysis. Complex I functions in the transfer of electrons from NADH to the respiratory chain. The immediate electron acceptor for the enzyme is believed to be ubiquinone. The chain is NADH-ubiquinone oxidoreductase chain 4 (MT-ND4) from Pelomedusa subrufa (African side-necked turtle).